The sequence spans 216 residues: Large ribosomal subunit protein uL24m (216 aa).

The transit peptide at 1 to 9 (MRLSALLAL) directs the protein to the mitochondrion. S24 bears the Phosphoserine mark. In terms of domain architecture, KOW spans 56 to 89 (LFCGDRVEILEGKDAGKQGKVVQVIRQRNWVVVE).

It belongs to the universal ribosomal protein uL24 family. Component of the mitochondrial ribosome large subunit (39S) which comprises a 16S rRNA and about 50 distinct proteins.

The protein resides in the mitochondrion. The protein is Large ribosomal subunit protein uL24m (MRPL24) of Bos taurus (Bovine).